We begin with the raw amino-acid sequence, 415 residues long: Plasminogen activator inhibitor 2 (415 aa).

Cysteines 5 and 405 form a disulfide. 3 N-linked (GlcNAc...) asparagine glycosylation sites follow: N75, N115, and N339.

This sequence belongs to the serpin family. Ov-serpin subfamily. As to quaternary structure, interacts with PSMB1. The signal sequence is not cleaved.

It localises to the cytoplasm. The protein localises to the secreted. Its subcellular location is the extracellular space. Its function is as follows. Inhibits urokinase-type plasminogen activator. The monocyte derived PAI-2 is distinct from the endothelial cell-derived PAI-1. The protein is Plasminogen activator inhibitor 2 (SERPINB2) of Homo sapiens (Human).